Reading from the N-terminus, the 537-residue chain is MARDPGRVLIFDTTLRDGEQSPGASLNLDEKLAIAQQLARLRVDIIEAGFPFASPGDFDAVQTIARQVGRPDGPVICGLARATRGDIKACADAVAPAANQRIHTFLATSDIHLEHKLRKSRAEVLQIVPEMVAYARSLVDDVEFSCEDAGRSDPEFMYQVIEAAIEAGATTINIPDTVGYSTPAEFGALIAGIDAHVPNIGQAVISVHGHNDLGLAVANFLEAVKNGARQLECTINGIGERAGNASLEELVMALHVRRSYFNGYLGRAEDSSEPLTGIQTEEIYKTSRLVSNLTGMAVQPNKAIVGANAFAHESGIHQDGVLKNRLTYEIIDARTIGLTDNRISLGKLSGRSAVRARLEELGYQLDGDDLNDAFARFKELADRKREITDRDLEAIVRQNAQQIEAYYQLAGVQVSCGRDLRATATVTLRTSDGEECSQAAIGTGPVDAVCQALNGLVQVPNELVEFSVKSVTEGIDAMGEVTIRLRQDGRLYSGHAADTDVVVAAAQAFVNALNRLVSGQKHSPLHPQRAPLPAPAL.

Residues 8 to 269 form the Pyruvate carboxyltransferase domain; that stretch reads VLIFDTTLRD…YFNGYLGRAE (262 aa). Mn(2+) is bound by residues Asp-17, His-208, His-210, and Asn-244. The interval 408-537 is regulatory domain; that stretch reads QLAGVQVSCG…QRAPLPAPAL (130 aa).

Belongs to the alpha-IPM synthase/homocitrate synthase family. LeuA type 1 subfamily. Homodimer. Mn(2+) serves as cofactor.

It localises to the cytoplasm. It catalyses the reaction 3-methyl-2-oxobutanoate + acetyl-CoA + H2O = (2S)-2-isopropylmalate + CoA + H(+). It participates in amino-acid biosynthesis; L-leucine biosynthesis; L-leucine from 3-methyl-2-oxobutanoate: step 1/4. Its function is as follows. Catalyzes the condensation of the acetyl group of acetyl-CoA with 3-methyl-2-oxobutanoate (2-ketoisovalerate) to form 3-carboxy-3-hydroxy-4-methylpentanoate (2-isopropylmalate). The polypeptide is 2-isopropylmalate synthase (Synechococcus sp. (strain RCC307)).